A 769-amino-acid polypeptide reads, in one-letter code: Cullin-3 (769 aa).

The tract at residues 614 to 655 (DRELPSTTSSTTTTTTTATSSSTSTSPSSSSSSISTPTPSKS) is disordered. A compositionally biased stretch (low complexity) spans 618–653 (PSTTSSTTTTTTTATSSSTSTSPSSSSSSISTPTPS). Residues 699–761 (DRKHQIEASI…REYLERSKQD (63 aa)) enclose the Cullin neddylation domain. A Glycyl lysine isopeptide (Lys-Gly) (interchain with G-Cter in NEDD8) cross-link involves residue Lys-713.

This sequence belongs to the cullin family. In terms of processing, neddylated. Deneddylated via its interaction with the COP9 signalosome (CSN) complex.

It is found in the nucleus. It functions in the pathway protein modification; protein ubiquitination. In terms of biological role, probable core component of cullin-based SCF-like E3 ubiquitin-protein ligase complexes which mediate the ubiquitination and subsequent proteasomal degradation of target proteins. The E3 ubiquitin-protein ligase activity of the complex is dependent on the neddylation of the cullin subunit. The protein is Cullin-3 (culC) of Dictyostelium discoideum (Social amoeba).